The sequence spans 468 residues: Glutamate--tRNA ligase (468 aa).

The 'HIGH' region motif lies at 12–22 (PSPTGFIHLGN). The short motif at 244–248 (KMSKR) is the 'KMSKS' region element. K247 serves as a coordination point for ATP.

It belongs to the class-I aminoacyl-tRNA synthetase family. Glutamate--tRNA ligase type 1 subfamily. As to quaternary structure, monomer.

Its subcellular location is the cytoplasm. It carries out the reaction tRNA(Glu) + L-glutamate + ATP = L-glutamyl-tRNA(Glu) + AMP + diphosphate. Functionally, catalyzes the attachment of glutamate to tRNA(Glu) in a two-step reaction: glutamate is first activated by ATP to form Glu-AMP and then transferred to the acceptor end of tRNA(Glu). The chain is Glutamate--tRNA ligase from Polynucleobacter necessarius subsp. necessarius (strain STIR1).